The primary structure comprises 100 residues: Small ribosomal subunit protein uS14 (100 aa).

The protein belongs to the universal ribosomal protein uS14 family. Part of the 30S ribosomal subunit. Contacts proteins S3 and S10.

Functionally, binds 16S rRNA, required for the assembly of 30S particles and may also be responsible for determining the conformation of the 16S rRNA at the A site. In Prochlorococcus marinus (strain MIT 9303), this protein is Small ribosomal subunit protein uS14.